A 97-amino-acid polypeptide reads, in one-letter code: RNA-binding protein Hfq (97 aa).

Residues 10–70 (DPFLNALRKE…ISTIVPARSV (61 aa)) enclose the Sm domain.

The protein belongs to the Hfq family. Homohexamer.

RNA chaperone that binds small regulatory RNA (sRNAs) and mRNAs to facilitate mRNA translational regulation in response to envelope stress, environmental stress and changes in metabolite concentrations. Also binds with high specificity to tRNAs. The polypeptide is RNA-binding protein Hfq (Neisseria gonorrhoeae (strain ATCC 700825 / FA 1090)).